We begin with the raw amino-acid sequence, 291 residues long: MPKLLGSFISFKAPNYFVQSAQDAIAIDATALMVFLGPPHSAYRVPFNKMQFSLGYELLKTKNINSNGLVVHAPYIINCASKDPLKQQNAISVLTNEIQLCNLAGAHYLVLHPGSAVAQTTNEALDNLVKVLNQVINKTKTTVICLETMAGKGNEIGRDLTELKYVIDRIVDKDRIGVCLDTCHFHDSGIDFSDLTGVFNTITTKLGFEFLKVIHLNESKNNCGSKKDRHANINAGMIGFENLMKFISHPQIKDLPIILETPSTSLNYPTIYREEISQIRSWFKTYQPDAN.

Positions 72, 112, 147, 181, 184, 215, 228, 230, and 260 each coordinate Zn(2+).

It belongs to the AP endonuclease 2 family. Requires Zn(2+) as cofactor.

It carries out the reaction Endonucleolytic cleavage to 5'-phosphooligonucleotide end-products.. In terms of biological role, endonuclease IV plays a role in DNA repair. It cleaves phosphodiester bonds at apurinic or apyrimidinic (AP) sites, generating a 3'-hydroxyl group and a 5'-terminal sugar phosphate. This chain is Probable endonuclease 4, found in Mycoplasma genitalium (strain ATCC 33530 / DSM 19775 / NCTC 10195 / G37) (Mycoplasmoides genitalium).